The primary structure comprises 283 residues: Pantothenate synthetase (283 aa).

Position 30-37 (M30–H37) interacts with ATP. H37 (proton donor) is an active-site residue. Residue Q61 participates in (R)-pantoate binding. Q61 is a beta-alanine binding site. G149 to D152 is a binding site for ATP. Q155 contacts (R)-pantoate. ATP-binding positions include V178 and F186–R189.

The protein belongs to the pantothenate synthetase family. As to quaternary structure, homodimer.

It localises to the cytoplasm. The catalysed reaction is (R)-pantoate + beta-alanine + ATP = (R)-pantothenate + AMP + diphosphate + H(+). It participates in cofactor biosynthesis; (R)-pantothenate biosynthesis; (R)-pantothenate from (R)-pantoate and beta-alanine: step 1/1. Its function is as follows. Catalyzes the condensation of pantoate with beta-alanine in an ATP-dependent reaction via a pantoyl-adenylate intermediate. In Proteus mirabilis (strain HI4320), this protein is Pantothenate synthetase.